The chain runs to 348 residues: Dihydroorotase (348 aa).

Positions 17 and 19 each coordinate Zn(2+). Substrate contacts are provided by residues 19-21 and Asn-45; that span reads HLR. Residues Lys-103, His-140, and His-178 each coordinate Zn(2+). Position 103 is an N6-carboxylysine (Lys-103). Residue His-140 participates in substrate binding. Leu-223 is a substrate binding site. Asp-251 provides a ligand contact to Zn(2+). Residue Asp-251 is part of the active site. Substrate contacts are provided by His-255 and Ala-267.

This sequence belongs to the metallo-dependent hydrolases superfamily. DHOase family. Class II DHOase subfamily. Homodimer. The cofactor is Zn(2+).

The catalysed reaction is (S)-dihydroorotate + H2O = N-carbamoyl-L-aspartate + H(+). It functions in the pathway pyrimidine metabolism; UMP biosynthesis via de novo pathway; (S)-dihydroorotate from bicarbonate: step 3/3. Functionally, catalyzes the reversible cyclization of carbamoyl aspartate to dihydroorotate. This Escherichia fergusonii (strain ATCC 35469 / DSM 13698 / CCUG 18766 / IAM 14443 / JCM 21226 / LMG 7866 / NBRC 102419 / NCTC 12128 / CDC 0568-73) protein is Dihydroorotase.